Consider the following 1050-residue polypeptide: Bifunctional glutamine synthetase adenylyltransferase/adenylyl-removing enzyme (1050 aa).

An adenylyl removase region spans residues 1–531; sequence MTDPLIHTRK…LHSQLFYRPL (531 aa). The interval 537–1050 is adenylyl transferase; sequence NLSVDAMKLS…LDSVEARREL (514 aa).

This sequence belongs to the GlnE family. Mg(2+) is required as a cofactor.

It carries out the reaction [glutamine synthetase]-O(4)-(5'-adenylyl)-L-tyrosine + phosphate = [glutamine synthetase]-L-tyrosine + ADP. The enzyme catalyses [glutamine synthetase]-L-tyrosine + ATP = [glutamine synthetase]-O(4)-(5'-adenylyl)-L-tyrosine + diphosphate. Functionally, involved in the regulation of glutamine synthetase GlnA, a key enzyme in the process to assimilate ammonia. When cellular nitrogen levels are high, the C-terminal adenylyl transferase (AT) inactivates GlnA by covalent transfer of an adenylyl group from ATP to specific tyrosine residue of GlnA, thus reducing its activity. Conversely, when nitrogen levels are low, the N-terminal adenylyl removase (AR) activates GlnA by removing the adenylyl group by phosphorolysis, increasing its activity. The regulatory region of GlnE binds the signal transduction protein PII (GlnB) which indicates the nitrogen status of the cell. This is Bifunctional glutamine synthetase adenylyltransferase/adenylyl-removing enzyme from Corynebacterium efficiens (strain DSM 44549 / YS-314 / AJ 12310 / JCM 11189 / NBRC 100395).